Reading from the N-terminus, the 338-residue chain is Aspartate carbamoyltransferase catalytic subunit (338 aa).

Arginine 72 and threonine 73 together coordinate carbamoyl phosphate. An L-aspartate-binding site is contributed by lysine 100. Residues arginine 122, histidine 152, and glutamine 155 each contribute to the carbamoyl phosphate site. Arginine 186 and arginine 243 together coordinate L-aspartate. Glycine 284 and proline 285 together coordinate carbamoyl phosphate.

This sequence belongs to the aspartate/ornithine carbamoyltransferase superfamily. ATCase family. As to quaternary structure, heterododecamer (2C3:3R2) of six catalytic PyrB chains organized as two trimers (C3), and six regulatory PyrI chains organized as three dimers (R2).

It catalyses the reaction carbamoyl phosphate + L-aspartate = N-carbamoyl-L-aspartate + phosphate + H(+). It functions in the pathway pyrimidine metabolism; UMP biosynthesis via de novo pathway; (S)-dihydroorotate from bicarbonate: step 2/3. Functionally, catalyzes the condensation of carbamoyl phosphate and aspartate to form carbamoyl aspartate and inorganic phosphate, the committed step in the de novo pyrimidine nucleotide biosynthesis pathway. The protein is Aspartate carbamoyltransferase catalytic subunit of Acinetobacter baylyi (strain ATCC 33305 / BD413 / ADP1).